The sequence spans 270 residues: 4-diphosphocytidyl-2-C-methyl-D-erythritol kinase (270 aa).

Residue Lys-8 is part of the active site. An ATP-binding site is contributed by 90 to 100 (PIGAGLGGGSS). Asp-132 is an active-site residue.

The protein belongs to the GHMP kinase family. IspE subfamily.

It catalyses the reaction 4-CDP-2-C-methyl-D-erythritol + ATP = 4-CDP-2-C-methyl-D-erythritol 2-phosphate + ADP + H(+). Its pathway is isoprenoid biosynthesis; isopentenyl diphosphate biosynthesis via DXP pathway; isopentenyl diphosphate from 1-deoxy-D-xylulose 5-phosphate: step 3/6. Its function is as follows. Catalyzes the phosphorylation of the position 2 hydroxy group of 4-diphosphocytidyl-2C-methyl-D-erythritol. The sequence is that of 4-diphosphocytidyl-2-C-methyl-D-erythritol kinase from Cytophaga hutchinsonii (strain ATCC 33406 / DSM 1761 / CIP 103989 / NBRC 15051 / NCIMB 9469 / D465).